The following is a 6733-amino-acid chain: Replicase polyprotein 1ab (6733 aa).

One can recognise a Macro domain in the interval 1633-1814 (FNQYYEFKVG…QYIEALGVVE (182 aa)). Residues 2183–2565 (LTHVNKFKIV…IMLPVFVIIL (383 aa)) form an HD1 region. 10 consecutive transmembrane segments (helical) span residues 2191-2211 (IVVY…DFSL), 2219-2239 (VFLL…LGLV), 2266-2286 (GVHW…DFFV), 2411-2431 (ALWF…PLMF), 2521-2541 (VAVS…IVVL), 2546-2566 (FVWF…IILF), 2769-2789 (VMLI…FMVG), 2937-2957 (IISP…FLFL), 2986-3006 (VLFV…LALW), and 3022-3042 (LFIL…GFVF). An HD2 region spans residues 2769–3042 (VMLIIALGAI…FVLIVGGFVF (274 aa)). Residues H3184, E3222, and S3291 each act as charge relay system; for 3C-like serine proteinase activity in the active site. Transmembrane regions (helical) follow at residues 3422–3442 (SNVS…FLVC), 3456–3478 (VVLP…VLFW), 3486–3506 (LAVT…LGLF), 3514–3534 (VGLI…VVVN), 3538–3558 (AIFV…LGVV), 3573–3593 (AVFA…LILF), and 3598–3613 (LMSF…FRVF). Positions 3430 to 3613 (NLHFIFSVYF…VVIVLSFRVF (184 aa)) are HD3. The NiRAN domain occupies 4442–4673 (DFKLLRDVWC…AKEMNVPADF (232 aa)). The 152-residue stretch at 4981–5132 (FDVFGSDYTK…FSKPGALKIF (152 aa)) folds into the RdRp catalytic domain. One can recognise a CV ZBD domain in the interval 5289–5404 (FDRVCFCCPN…NGVAQLLTPV (116 aa)). Residues C5293, C5296, C5304, C5307, C5314, C5317, H5321, H5327, C5336, C5338, C5359, and C5362 each contribute to the Zn(2+) site. Positions 5509 to 5688 (NQPWRLATCF…LQLATQKRYL (180 aa)) constitute a (+)RNA virus helicase ATP-binding domain. One can recognise a (+)RNA virus helicase C-terminal domain in the interval 5689–5848 (TACYRCPPQI…FGMEKQSDFN (160 aa)). The 214-residue stretch at 5846-6059 (DFNIIPEVAS…YLASYDAAFK (214 aa)) folds into the ExoN domain. Active-site residues include D5860, E5862, and D5961. Residues H6025, C6029, and H6033 each contribute to the Zn(2+) site. Active-site residues include H6037 and D6042. Zn(2+) is bound at residue C6048. A NendoU domain is found at 6327–6467 (LPETLFSTGR…GEDDIQTFYP (141 aa)). Catalysis depends on residues H6363, H6380, K6412, K6509, D6585, K6613, and E6647. The region spanning 6469-6733 (KEFIRSYYEW…EVPLLCQMKH (265 aa)) is the Nidovirus-type SAM-dependent 2'-O-MTase domain.

Specific enzymatic cleavages in vivo by its own protease yield mature proteins. 3CL-PRO is autocatalytically processed.

It localises to the host membrane. It carries out the reaction RNA(n) + a ribonucleoside 5'-triphosphate = RNA(n+1) + diphosphate. The enzyme catalyses ATP + H2O = ADP + phosphate + H(+). Functionally, the 3C-like serine proteinase is responsible for the majority of cleavages. In terms of biological role, the helicase which contains a zinc finger structure displays RNA and DNA duplex-unwinding activities with 5' to 3' polarity. Acts on both ssRNA and dsRNA in a 3' to 5' direction. Its function is as follows. NendoU is a Mn(2+)-dependent, uridylate-specific enzyme, which leaves 2'-3'-cyclic phosphates 5' to the cleaved bond. This Bos taurus (Bovine) protein is Replicase polyprotein 1ab (rep).